We begin with the raw amino-acid sequence, 78 residues long: Major outer membrane lipoprotein Lpp (78 aa).

Residues 1 to 20 (MNRTKIVLGAVVLASTLLAG) form the signal peptide. Cys21 carries the N-palmitoyl cysteine lipid modification. Cys21 carries the S-diacylglycerol cysteine lipid modification. Repeats lie at residues 24–34 (TAKVDQLTSDI) and 38–48 (NAKVDQLSNDV). Residues 27 to 75 (VDQLTSDIQTLNAKVDQLSNDVNAVHTDVQAAKDDAARANQRLDNQVRS) are a coiled coil. An N6-murein peptidoglycan lysine modification is found at Lys78.

The protein belongs to the Lpp family. As to quaternary structure, homotrimer.

The protein resides in the cell outer membrane. Its subcellular location is the secreted. The protein localises to the cell wall. In terms of biological role, a highly abundant outer membrane lipoprotein that controls the distance between the inner and outer membranes. The only protein known to be covalently linked to the peptidoglycan network (PGN). Also non-covalently binds the PGN. The link between the cell outer membrane and PGN contributes to maintenance of the structural and functional integrity of the cell envelope, and maintains the correct distance between the PGN and the outer membrane. This is Major outer membrane lipoprotein Lpp from Photorhabdus laumondii subsp. laumondii (strain DSM 15139 / CIP 105565 / TT01) (Photorhabdus luminescens subsp. laumondii).